A 541-amino-acid polypeptide reads, in one-letter code: Chaperonin GroEL (541 aa).

Residues 29–32 (TAGP), lysine 50, 86–90 (DGTTT), glycine 416, and aspartate 498 each bind ATP.

The protein belongs to the chaperonin (HSP60) family. Forms a cylinder of 14 subunits composed of two heptameric rings stacked back-to-back. Interacts with the co-chaperonin GroES.

Its subcellular location is the cytoplasm. It catalyses the reaction ATP + H2O + a folded polypeptide = ADP + phosphate + an unfolded polypeptide.. Its function is as follows. Together with its co-chaperonin GroES, plays an essential role in assisting protein folding. The GroEL-GroES system forms a nano-cage that allows encapsulation of the non-native substrate proteins and provides a physical environment optimized to promote and accelerate protein folding. This Anaplasma phagocytophilum (Ehrlichia phagocytophila) protein is Chaperonin GroEL.